The sequence spans 131 residues: UPF0102 protein YraN (131 aa).

Polar residues predominate over residues 1–19; that stretch reads MATVPTRSGSPRQLTTKQT. The segment at 1 to 20 is disordered; that stretch reads MATVPTRSGSPRQLTTKQTG.

It belongs to the UPF0102 family.

This Escherichia fergusonii (strain ATCC 35469 / DSM 13698 / CCUG 18766 / IAM 14443 / JCM 21226 / LMG 7866 / NBRC 102419 / NCTC 12128 / CDC 0568-73) protein is UPF0102 protein YraN.